The following is a 134-amino-acid chain: UPF0102 protein Dvul_2148 (134 aa).

It belongs to the UPF0102 family.

In Nitratidesulfovibrio vulgaris (strain DP4) (Desulfovibrio vulgaris), this protein is UPF0102 protein Dvul_2148.